The primary structure comprises 257 residues: Small ribosomal subunit protein uS3 (257 aa).

One can recognise a KH type-2 domain in the interval 40 to 110 (IRKYLSTKYK…LVSLKVVEVQ (71 aa)). The disordered stretch occupies residues 223–257 (ANKEFSRSSKPKKGSFNRSSRSKNTKPAPKQAVSE). Residues 231-246 (SKPKKGSFNRSSRSKN) show a composition bias toward basic residues.

This sequence belongs to the universal ribosomal protein uS3 family. Part of the 30S ribosomal subunit. Forms a tight complex with proteins S10 and S14.

In terms of biological role, binds the lower part of the 30S subunit head. Binds mRNA in the 70S ribosome, positioning it for translation. The sequence is that of Small ribosomal subunit protein uS3 from Ureaplasma parvum serovar 3 (strain ATCC 27815 / 27 / NCTC 11736).